The sequence spans 411 residues: Citrate synthase (411 aa).

Active-site residues include H304 and D363.

It belongs to the citrate synthase family.

It catalyses the reaction oxaloacetate + acetyl-CoA + H2O = citrate + CoA + H(+). It functions in the pathway carbohydrate metabolism; tricarboxylic acid cycle; isocitrate from oxaloacetate: step 1/2. This chain is Citrate synthase (gltA), found in Rickettsia parkeri.